Consider the following 503-residue polypeptide: Trehalose-6-phosphate synthase (503 aa).

The segment covering 1-14 has biased composition (polar residues); that stretch reads MTDQSGNGVRSGSA. The disordered stretch occupies residues 1–20; that stretch reads MTDQSGNGVRSGSASEAPPS. D-glucose 6-phosphate is bound at residue arginine 31. A UDP-alpha-D-glucose-binding site is contributed by 51 to 52; the sequence is GG. D-glucose 6-phosphate contacts are provided by tyrosine 109 and aspartate 163. 2 residues coordinate UDP-alpha-D-glucose: arginine 305 and lysine 310. A D-glucose 6-phosphate-binding site is contributed by arginine 343. Position 408-412 (408-412) interacts with UDP-alpha-D-glucose; that stretch reads LVAKE.

It belongs to the glycosyltransferase 20 family. As to quaternary structure, homotetramer.

It carries out the reaction ADP-alpha-D-glucose + D-glucose 6-phosphate = alpha,alpha-trehalose 6-phosphate + ADP + H(+). The catalysed reaction is CDP-alpha-D-glucose + D-glucose 6-phosphate = alpha,alpha-trehalose 6-phosphate + CDP + H(+). It catalyses the reaction GDP-alpha-D-glucose + D-glucose 6-phosphate = alpha,alpha-trehalose 6-phosphate + GDP + H(+). The enzyme catalyses TDP-alpha-D-glucose + D-glucose 6-phosphate = 5-methyl-UDP + alpha,alpha-trehalose 6-phosphate + H(+). It carries out the reaction D-glucose 6-phosphate + UDP-alpha-D-glucose = alpha,alpha-trehalose 6-phosphate + UDP + H(+). Its pathway is glycan biosynthesis; trehalose biosynthesis. In terms of biological role, probably involved in the osmoprotection via the biosynthesis of trehalose and in the production of glycogen and alpha-glucan via the TreS-Pep2 branch involved in the biosynthesis of maltose-1-phosphate (M1P). Catalyzes the transfer of glucose from UDP-glucose (UDP-Glc) to D-glucose 6-phosphate (Glc-6-P) to form trehalose-6-phosphate. Probably also able to use ADP-Glc, CDP-Glc, GDP-Glc and TDP-Glc as glucosyl donors. This Mycolicibacterium gilvum (strain PYR-GCK) (Mycobacterium gilvum (strain PYR-GCK)) protein is Trehalose-6-phosphate synthase.